Here is a 548-residue protein sequence, read N- to C-terminus: Probable 5-epi-aristolochene synthase 4 (548 aa).

The Mg(2+) site is built by D301, D305, D444, T448, and E452. Positions 301-305 (DDTFD) match the DDXXD motif motif.

It belongs to the terpene synthase family. In terms of assembly, monomer. It depends on Mg(2+) as a cofactor.

The protein localises to the cytoplasm. The catalysed reaction is (2E,6E)-farnesyl diphosphate = (+)-5-epi-aristolochene + diphosphate. It participates in secondary metabolite biosynthesis; terpenoid biosynthesis. In terms of biological role, catalyzes the cyclization of trans,trans-farnesyl diphosphate (FPP) to the bicyclic intermediate 5-epi-aristolochene, initial step in the conversion of FPP to the sesquiterpenoid antifungal phytoalexin capsidiol. Produces germacrene A as an enzyme-bound intermediate that is not released by the enzyme, but is further cyclized to produce the bicyclic 5-epi-aristolochene. The polypeptide is Probable 5-epi-aristolochene synthase 4 (Nicotiana attenuata (Coyote tobacco)).